The sequence spans 62 residues: Large ribosomal subunit protein uL30 (62 aa).

The protein belongs to the universal ribosomal protein uL30 family. In terms of assembly, part of the 50S ribosomal subunit.

The chain is Large ribosomal subunit protein uL30 from Alkalilimnicola ehrlichii (strain ATCC BAA-1101 / DSM 17681 / MLHE-1).